Reading from the N-terminus, the 442-residue chain is Armadillo-like helical domain containing protein 1 (442 aa).

In Bos taurus (Bovine), this protein is Armadillo-like helical domain containing protein 1.